The following is a 456-amino-acid chain: Shootin-1 (456 aa).

M1 carries the N-acetylmethionine modification. Residues S3 and S4 each carry the phosphoserine modification. A coiled-coil region spans residues 7–353 (EKQLQLITSL…RVNQSENSVP (347 aa)). Residues S101 and S249 each carry the phosphoserine; by PAK1 modification. Disordered regions lie at residues 343–405 (KRVN…VTDL) and 418–445 (KKGV…CESA). The segment covering 352 to 369 (VPPPPPPPPPLPPPPPNP) has biased composition (pro residues). S375 is modified (phosphoserine).

Belongs to the shootin family. In terms of assembly, interacts with L1CAM; this interaction occurs in axonal growth cones. Interacts with actin filament retrograde flow; this interaction is enhanced in a netrin-1- and PAK1-dependent manner and promotes F-actin-substrate coupling and concomitant formation of traction forces at axonal growth cones. Interacts with RUFY3. Interacts with PFN2. Interacts (via N-terminus) with KIF20B; this interaction is direct and promotes the association of SHTN1 to microtubules in primary neurons. Associates with microtubule. Post-translationally, phosphorylated on Ser-101 and Ser-249 by PAK1 through a CDC42- and RAC1-dependent signaling pathway, which enhances its association with F-actin retrograde flow in filopodia and lamellipodia of axonal growth cones. Phosphorylation on Ser-101 and Ser-249 is increased by netrin-1.

Its subcellular location is the perikaryon. The protein localises to the cell projection. It localises to the axon. The protein resides in the growth cone. It is found in the cytoplasm. Its subcellular location is the cytoskeleton. The protein localises to the filopodium. It localises to the lamellipodium. Involved in the generation of internal asymmetric signals required for neuronal polarization and neurite outgrowth. Mediates netrin-1-induced F-actin-substrate coupling or 'clutch engagement' within the axon growth cone through activation of CDC42, RAC1 and PAK1-dependent signaling pathway, thereby converting the F-actin retrograde flow into traction forces, concomitantly with filopodium extension and axon outgrowth. Plays a role in cytoskeletal organization by regulating the subcellular localization of phosphoinositide 3-kinase (PI3K) activity at the axonal growth cone. Also plays a role in regenerative neurite outgrowth. In the developing cortex, cooperates with KIF20B to promote both the transition from the multipolar to the bipolar stage and the radial migration of cortical neurons from the ventricular zone toward the superficial layer of the neocortex. Involved in the accumulation of phosphatidylinositol 3,4,5-trisphosphate (PIP3) in the growth cone of primary hippocampal neurons. This is Shootin-1 from Pongo abelii (Sumatran orangutan).